A 427-amino-acid polypeptide reads, in one-letter code: Glutamate-1-semialdehyde 2,1-aminomutase (427 aa).

N6-(pyridoxal phosphate)lysine is present on Lys-265.

It belongs to the class-III pyridoxal-phosphate-dependent aminotransferase family. HemL subfamily. In terms of assembly, homodimer. Pyridoxal 5'-phosphate serves as cofactor.

The protein resides in the cytoplasm. It catalyses the reaction (S)-4-amino-5-oxopentanoate = 5-aminolevulinate. It participates in porphyrin-containing compound metabolism; protoporphyrin-IX biosynthesis; 5-aminolevulinate from L-glutamyl-tRNA(Glu): step 2/2. The polypeptide is Glutamate-1-semialdehyde 2,1-aminomutase (Photorhabdus laumondii subsp. laumondii (strain DSM 15139 / CIP 105565 / TT01) (Photorhabdus luminescens subsp. laumondii)).